The primary structure comprises 1414 residues: DNA-directed RNA polymerase subunit beta' (1414 aa).

Residues Cys70, Cys72, Cys85, and Cys88 each contribute to the Zn(2+) site. Mg(2+)-binding residues include Asp460, Asp462, and Asp464. Residues Cys819, Cys893, Cys900, and Cys903 each contribute to the Zn(2+) site. Residues 1391-1414 (AEEAFDFGTPSAPAEEPQQHPAAE) form a disordered region. A compositionally biased stretch (low complexity) spans 1400-1414 (PSAPAEEPQQHPAAE).

Belongs to the RNA polymerase beta' chain family. The RNAP catalytic core consists of 2 alpha, 1 beta, 1 beta' and 1 omega subunit. When a sigma factor is associated with the core the holoenzyme is formed, which can initiate transcription. Mg(2+) serves as cofactor. Zn(2+) is required as a cofactor.

The enzyme catalyses RNA(n) + a ribonucleoside 5'-triphosphate = RNA(n+1) + diphosphate. DNA-dependent RNA polymerase catalyzes the transcription of DNA into RNA using the four ribonucleoside triphosphates as substrates. The chain is DNA-directed RNA polymerase subunit beta' from Burkholderia lata (strain ATCC 17760 / DSM 23089 / LMG 22485 / NCIMB 9086 / R18194 / 383).